The chain runs to 197 residues: Phosphoheptose isomerase (197 aa).

In terms of domain architecture, SIS spans 34–196 (MVHCLLSGNK…DHTLFPQDEQ (163 aa)). A substrate-binding site is contributed by 49-51 (NGG). Zn(2+)-binding residues include histidine 58 and glutamate 62. Substrate-binding positions include glutamate 62, 91 to 92 (ND), 117 to 119 (STS), serine 122, and glutamine 172. Glutamine 172 and histidine 180 together coordinate Zn(2+).

Belongs to the SIS family. GmhA subfamily. In terms of assembly, homotetramer. Requires Zn(2+) as cofactor.

Its subcellular location is the cytoplasm. The enzyme catalyses 2 D-sedoheptulose 7-phosphate = D-glycero-alpha-D-manno-heptose 7-phosphate + D-glycero-beta-D-manno-heptose 7-phosphate. It participates in carbohydrate biosynthesis; D-glycero-D-manno-heptose 7-phosphate biosynthesis; D-glycero-alpha-D-manno-heptose 7-phosphate and D-glycero-beta-D-manno-heptose 7-phosphate from sedoheptulose 7-phosphate: step 1/1. In terms of biological role, catalyzes the isomerization of sedoheptulose 7-phosphate in D-glycero-D-manno-heptose 7-phosphate. The chain is Phosphoheptose isomerase from Shewanella halifaxensis (strain HAW-EB4).